Here is a 780-residue protein sequence, read N- to C-terminus: Kojibiose phosphorylase (780 aa).

354–355 (WD) provides a ligand contact to substrate. E496 acts as the Proton donor in catalysis. 608–609 (KQ) contacts substrate.

This sequence belongs to the glycosyl hydrolase 65 family.

It catalyses the reaction kojibiose + phosphate = beta-D-glucose 1-phosphate + D-glucose. Functionally, catalyzes the reversible phosphorolysis of kojibiose into beta-D-glucose 1-phosphate (Glc1P) and D-glucose. In the reverse direction, uses Glc1P as acceptor to produce alpha-1,2-glucans up to a degree of polymerization of 6. This chain is Kojibiose phosphorylase, found in Halothermothrix orenii (strain H 168 / OCM 544 / DSM 9562).